A 285-amino-acid polypeptide reads, in one-letter code: 4,4'-diapophytoene synthase (285 aa).

(2E,6E)-farnesyl diphosphate is bound by residues 18 to 21 (YSKS), Y41, and R45. Mg(2+)-binding residues include D48 and D52. Residue Q163 coordinates (2E,6E)-farnesyl diphosphate. N166 provides a ligand contact to Mg(2+). R169 serves as a coordination point for (2E,6E)-farnesyl diphosphate. Mg(2+) is bound at residue D170. Y247 serves as a coordination point for (2E,6E)-farnesyl diphosphate.

The protein belongs to the phytoene/squalene synthase family. CrtM subfamily. Requires Mg(2+) as cofactor.

It catalyses the reaction 2 (2E,6E)-farnesyl diphosphate = 15-cis-4,4'-diapophytoene + 2 diphosphate. It functions in the pathway carotenoid biosynthesis; staphyloxanthin biosynthesis; staphyloxanthin from farnesyl diphosphate: step 1/5. Its function is as follows. Involved in the biosynthesis of the yellow-orange carotenoid staphyloxanthin, which plays a role in the virulence via its protective function against oxidative stress. Catalyzes the head-to-head condensation of two molecules of farnesyl diphosphate (FPP) into the colorless C(30) carotenoid 4,4'-diapophytoene (dehydrosqualene). This chain is 4,4'-diapophytoene synthase (crtM), found in Staphylococcus haemolyticus (strain JCSC1435).